Consider the following 178-residue polypeptide: MVTFRFHQYQVVGRGLPSETDEHPKIYRMKLWATNEVRAKSKFWYFLRKLKKVKKSNGQMLAINEIFEKNPTKIKNYGIWLRYQSRTGYHNMYKEYRDTTLNGAVEQMYIEMASRHRVRFPCIQIIKTATIPAKLCKRESSKQFHNSKIKFPLVTRKIRPPSRKLKTHYKASRPNLFM.

The protein belongs to the eukaryotic ribosomal protein eL20 family.

This Castanea sativa (Sweet chestnut) protein is Large ribosomal subunit protein eL20 (RPL18A).